Consider the following 272-residue polypeptide: Phosphatidylglycerol--prolipoprotein diacylglyceryl transferase (272 aa).

A run of 4 helical transmembrane segments spans residues 24-44 (WYALAYIAGLVIGWAYARHLV), 64-84 (LLVYTALGVILGGRLGYVVFY), 99-119 (LWQGGMSFHGGLVGAGVGVML), and 125-145 (GLPTLALGDIVSAVAPIGLFL). Arg147 contributes to the a 1,2-diacyl-sn-glycero-3-phospho-(1'-sn-glycerol) binding site. 3 consecutive transmembrane segments (helical) span residues 185-205 (AAAEGALLFLLLFVAVRLGAL), 209-229 (GLVTGLFAIGYGCARILCEFF), and 245-265 (MGMLLSLPLIAAGLALVAFAY).

This sequence belongs to the Lgt family.

The protein resides in the cell inner membrane. It carries out the reaction L-cysteinyl-[prolipoprotein] + a 1,2-diacyl-sn-glycero-3-phospho-(1'-sn-glycerol) = an S-1,2-diacyl-sn-glyceryl-L-cysteinyl-[prolipoprotein] + sn-glycerol 1-phosphate + H(+). Its pathway is protein modification; lipoprotein biosynthesis (diacylglyceryl transfer). Catalyzes the transfer of the diacylglyceryl group from phosphatidylglycerol to the sulfhydryl group of the N-terminal cysteine of a prolipoprotein, the first step in the formation of mature lipoproteins. This chain is Phosphatidylglycerol--prolipoprotein diacylglyceryl transferase, found in Methylocella silvestris (strain DSM 15510 / CIP 108128 / LMG 27833 / NCIMB 13906 / BL2).